We begin with the raw amino-acid sequence, 236 residues long: Peroxisomal membrane protein 11D (236 aa).

G2 bears the N-acetylglycine mark. At G2–K92 the chain is on the cytoplasmic side. The chain crosses the membrane as a helical span at residues N93–G109. Over R110–T207 the chain is Lumenal. A helical membrane pass occupies residues P208–L227. Residues P228–P236 lie on the Cytoplasmic side of the membrane.

This sequence belongs to the peroxin-11 family. Homooligomer. Interacts with ARC5 and FIS1B on peroxisomes. As to expression, expressed in developing siliques.

It is found in the peroxisome membrane. Involved in peroxisomal proliferation. Promotes peroxisomal duplication, aggregation or elongation without fission. The chain is Peroxisomal membrane protein 11D (PEX11D) from Arabidopsis thaliana (Mouse-ear cress).